The sequence spans 117 residues: Immunoglobulin lambda variable 7-46 (117 aa).

Residues 1-19 (MAWTPLFLFLLTCCPGSNS) form the signal peptide. A framework-1 region spans residues 20–44 (QAVVTQEPSLTVSPGGTVTLTCGSS). One can recognise an Ig-like domain in the interval 20–117 (QAVVTQEPSL…YCLLSYSGAR (98 aa)). The cysteines at positions 41 and 109 are disulfide-linked. A complementarity-determining-1 region spans residues 45-53 (TGAVTSGHY). Positions 54-70 (PYWFQQKPGQAPRTLIY) are framework-2. Residues 71 to 73 (DTS) form a complementarity-determining-2 region. Positions 74–109 (NKHSWTPARFSGSLLGGKAALTLLGAQPEDEAEYYC) are framework-3. Residues 110–117 (LLSYSGAR) form a complementarity-determining-3 region.

Immunoglobulins are composed of two identical heavy chains and two identical light chains; disulfide-linked.

The protein resides in the secreted. It is found in the cell membrane. Functionally, v region of the variable domain of immunoglobulin light chains that participates in the antigen recognition. Immunoglobulins, also known as antibodies, are membrane-bound or secreted glycoproteins produced by B lymphocytes. In the recognition phase of humoral immunity, the membrane-bound immunoglobulins serve as receptors which, upon binding of a specific antigen, trigger the clonal expansion and differentiation of B lymphocytes into immunoglobulins-secreting plasma cells. Secreted immunoglobulins mediate the effector phase of humoral immunity, which results in the elimination of bound antigens. The antigen binding site is formed by the variable domain of one heavy chain, together with that of its associated light chain. Thus, each immunoglobulin has two antigen binding sites with remarkable affinity for a particular antigen. The variable domains are assembled by a process called V-(D)-J rearrangement and can then be subjected to somatic hypermutations which, after exposure to antigen and selection, allow affinity maturation for a particular antigen. This chain is Immunoglobulin lambda variable 7-46, found in Homo sapiens (Human).